The chain runs to 500 residues: Lysine--tRNA ligase (500 aa).

Glu-410 and Glu-417 together coordinate Mg(2+).

This sequence belongs to the class-II aminoacyl-tRNA synthetase family. As to quaternary structure, homodimer. Mg(2+) serves as cofactor.

It localises to the cytoplasm. It carries out the reaction tRNA(Lys) + L-lysine + ATP = L-lysyl-tRNA(Lys) + AMP + diphosphate. The polypeptide is Lysine--tRNA ligase (Pseudomonas putida (strain W619)).